The following is a 380-amino-acid chain: tRNA-specific 2-thiouridylase MnmA (380 aa).

ATP is bound by residues 25-32 (AMSGGVDS) and M51. C119 acts as the Nucleophile in catalysis. C119 and C216 are joined by a disulfide. G143 serves as a coordination point for ATP. Residues 166–168 (KDQ) are interaction with tRNA. The active-site Cysteine persulfide intermediate is the C216. The segment at 320 to 321 (RY) is interaction with tRNA.

This sequence belongs to the MnmA/TRMU family.

Its subcellular location is the cytoplasm. It carries out the reaction S-sulfanyl-L-cysteinyl-[protein] + uridine(34) in tRNA + AH2 + ATP = 2-thiouridine(34) in tRNA + L-cysteinyl-[protein] + A + AMP + diphosphate + H(+). Its function is as follows. Catalyzes the 2-thiolation of uridine at the wobble position (U34) of tRNA, leading to the formation of s(2)U34. In Deinococcus radiodurans (strain ATCC 13939 / DSM 20539 / JCM 16871 / CCUG 27074 / LMG 4051 / NBRC 15346 / NCIMB 9279 / VKM B-1422 / R1), this protein is tRNA-specific 2-thiouridylase MnmA.